A 126-amino-acid polypeptide reads, in one-letter code: Holo-[acyl-carrier-protein] synthase (126 aa).

2 residues coordinate Mg(2+): aspartate 9 and glutamate 58.

The protein belongs to the P-Pant transferase superfamily. AcpS family. Requires Mg(2+) as cofactor.

The protein localises to the cytoplasm. The enzyme catalyses apo-[ACP] + CoA = holo-[ACP] + adenosine 3',5'-bisphosphate + H(+). Its function is as follows. Transfers the 4'-phosphopantetheine moiety from coenzyme A to a Ser of acyl-carrier-protein. This chain is Holo-[acyl-carrier-protein] synthase, found in Buchnera aphidicola subsp. Cinara cedri (strain Cc).